Here is a 226-residue protein sequence, read N- to C-terminus: PKHD-type hydroxylase Abu_0724 (226 aa).

A Fe2OG dioxygenase domain is found at 78–178 (HIISPFFNKY…RMVSFMWIQS (101 aa)). The Fe cation site is built by H96, D98, and H159. R169 is a 2-oxoglutarate binding site.

Fe(2+) is required as a cofactor. It depends on L-ascorbate as a cofactor.

The polypeptide is PKHD-type hydroxylase Abu_0724 (Aliarcobacter butzleri (strain RM4018) (Arcobacter butzleri)).